The sequence spans 495 residues: Taxoid 2-alpha-hydroxylase (495 aa).

The chain crosses the membrane as a helical span at residues 17–37 (LQSSAILLTVVSGIIVIVILL). Cys441 is a binding site for heme.

This sequence belongs to the cytochrome P450 family.

The protein localises to the microsome membrane. The enzyme catalyses taxusin + reduced [NADPH--hemoprotein reductase] + O2 = 2alpha-hydroxytaxusin + oxidized [NADPH--hemoprotein reductase] + H2O + H(+). It carries out the reaction 7beta-hydroxytaxusin + reduced [NADPH--hemoprotein reductase] + O2 = 2alpha,7beta-dihydroxytaxusin + oxidized [NADPH--hemoprotein reductase] + H2O + H(+). It functions in the pathway alkaloid biosynthesis; taxol biosynthesis. In terms of biological role, catalyzes the conversion of taxusin to 2-alpha-hydroxytaxusin in taxol biosynthesis. Catalyzes the conversion of 7-beta-hydroxytaxusin to 2-alpha-7-beta-hydroxytaxusin in taxol biosynthesis. The polypeptide is Taxoid 2-alpha-hydroxylase (Taxus canadensis (Canadian yew)).